The chain runs to 484 residues: Membrane-bound lytic murein transglycosylase F (484 aa).

An N-terminal signal peptide occupies residues 1 to 18 (MKGLLLRIIAAFALVLWA). A non-LT domain region spans residues 19–267 (IDMVFPWQQM…RIEEKYFNHF (249 aa)). Residues 268–484 (SQFDYVDMRQ…PLTDNQEKQE (217 aa)) form an LT domain region. Glutamate 312 is an active-site residue. A disordered region spans residues 459 to 484 (ADNKDKPSETDENLPLPLTDNQEKQE).

The protein in the N-terminal section; belongs to the bacterial solute-binding protein 3 family. It in the C-terminal section; belongs to the transglycosylase Slt family.

It localises to the cell outer membrane. It catalyses the reaction Exolytic cleavage of the (1-&gt;4)-beta-glycosidic linkage between N-acetylmuramic acid (MurNAc) and N-acetylglucosamine (GlcNAc) residues in peptidoglycan, from either the reducing or the non-reducing ends of the peptidoglycan chains, with concomitant formation of a 1,6-anhydrobond in the MurNAc residue.. In terms of biological role, murein-degrading enzyme that degrades murein glycan strands and insoluble, high-molecular weight murein sacculi, with the concomitant formation of a 1,6-anhydromuramoyl product. Lytic transglycosylases (LTs) play an integral role in the metabolism of the peptidoglycan (PG) sacculus. Their lytic action creates space within the PG sacculus to allow for its expansion as well as for the insertion of various structures such as secretion systems and flagella. This chain is Membrane-bound lytic murein transglycosylase F, found in Mannheimia succiniciproducens (strain KCTC 0769BP / MBEL55E).